The following is a 216-amino-acid chain: Holliday junction branch migration complex subunit RuvA (216 aa).

Residues 1 to 64 form a domain I region; that stretch reads MISFIKGVLI…EDAQQLYGFK (64 aa). A domain II region spans residues 65-143; it reads SKVDKKVFQE…KMANEIYAQT (79 aa). Positions 144-163 are flexible linker; the sequence is SGTTTTSQDSQAQQAPTSVV. The segment at 164-216 is domain III; sequence LANSIFNESVDALLALGYKQKDAEKMARSAMGDATTAAEVIRKALQGSIKSKG.

The protein belongs to the RuvA family. As to quaternary structure, homotetramer. Forms an RuvA(8)-RuvB(12)-Holliday junction (HJ) complex. HJ DNA is sandwiched between 2 RuvA tetramers; dsDNA enters through RuvA and exits via RuvB. An RuvB hexamer assembles on each DNA strand where it exits the tetramer. Each RuvB hexamer is contacted by two RuvA subunits (via domain III) on 2 adjacent RuvB subunits; this complex drives branch migration. In the full resolvosome a probable DNA-RuvA(4)-RuvB(12)-RuvC(2) complex forms which resolves the HJ.

The protein resides in the cytoplasm. The RuvA-RuvB-RuvC complex processes Holliday junction (HJ) DNA during genetic recombination and DNA repair, while the RuvA-RuvB complex plays an important role in the rescue of blocked DNA replication forks via replication fork reversal (RFR). RuvA specifically binds to HJ cruciform DNA, conferring on it an open structure. The RuvB hexamer acts as an ATP-dependent pump, pulling dsDNA into and through the RuvAB complex. HJ branch migration allows RuvC to scan DNA until it finds its consensus sequence, where it cleaves and resolves the cruciform DNA. This Francisella tularensis subsp. holarctica (strain FTNF002-00 / FTA) protein is Holliday junction branch migration complex subunit RuvA.